Reading from the N-terminus, the 360-residue chain is MKTSMQRKLDQLSTRLAELNDLLSRENVTADLDQYRRLTREHAELGPVVEQYALWRQSRNDETAAQELLADASMRDFAEDEIRSARERMVRLEAELQKMLLPKDPNDDRNIFLEIRAGAGGDESALFAGDLLRMYLRFAERQRWQVEMMSESASDLGGYKEVIVRIAGQGAYSRLKFESGGHRVQRVPATETQGRIHTSACTVAVMPEADEIGEVEINPADLRIDTFRASGAGGQHINKTDSAVRVTHIPTGIVVECQDDRSQHKNKDRALKVLAARIKDKQYHEQHAKEAATRKSLIGSGDRSERIRTYNFPQGRMTDHRINLTLYRLEALMDGDLDELIGALVTEHQAELLASLGDTD.

Q235 is subject to N5-methylglutamine.

This sequence belongs to the prokaryotic/mitochondrial release factor family. Post-translationally, methylated by PrmC. Methylation increases the termination efficiency of RF1.

The protein resides in the cytoplasm. In terms of biological role, peptide chain release factor 1 directs the termination of translation in response to the peptide chain termination codons UAG and UAA. In Burkholderia ambifaria (strain MC40-6), this protein is Peptide chain release factor 1.